A 71-amino-acid polypeptide reads, in one-letter code: Small ribosomal subunit protein bS21 (71 aa).

Positions 48–59 (KAAAAVKRHAKK) are enriched in basic residues. Residues 48 to 71 (KAAAAVKRHAKKVQRENRKFQRLY) form a disordered region. Residues 60–71 (VQRENRKFQRLY) show a composition bias toward basic and acidic residues.

The protein belongs to the bacterial ribosomal protein bS21 family.

This Teredinibacter turnerae (strain ATCC 39867 / T7901) protein is Small ribosomal subunit protein bS21.